The chain runs to 289 residues: Aquaporin PIP1-2 (289 aa).

The interval 1 to 36 (MEGKEEDVRLGANKFSERQPIGTAAQGAADDKDYKE) is disordered. Transmembrane regions (helical) follow at residues 58–78 (IAEF…VMGV) and 93–115 (IAWS…SGGH). Positions 117-119 (NPA) match the NPA 1 motif. The next 3 helical transmembrane spans lie at 136-156 (LFYI…VKGF), 178-198 (GDGL…VFSA), and 212-232 (ILAP…TIPI). The NPA 2 signature appears at 238-240 (NPA). The helical transmembrane segment at 260 to 280 (IFWVGPFIGAALAAIYHQVII) threads the bilayer.

The protein belongs to the MIP/aquaporin (TC 1.A.8) family. PIP (TC 1.A.8.11) subfamily. As to quaternary structure, interacts with PIP2-1 to form heteromers. In terms of tissue distribution, highly expressed in developing tassels and at lower levels in roots, shoots, ears and embryos. Expressed in the root growing zone at 5-6 mm from the root tip. Expressed in xylem parenchyma.

It is found in the cell membrane. Water channel required to facilitate the transport of water across cell membrane. Active as heteromers with PIP1-1, PIP2-1, PIP2-4 or PIP2-5, but not as homomers. This is Aquaporin PIP1-2 (PIP1-2) from Zea mays (Maize).